A 343-amino-acid chain; its full sequence is MRMNFSTVLLGSSVALAAVSGAQAADAIVAAEPEPMDYVRVCDAFGIGYFYIPGTETCLKINGYARFQVSFGPDEVNKRQGWGAQGTSDWDAFSRAYIAFSAKSDTELGTLTGFFASEFNADNDSDVGDSLINLDEAYIQLGGFKAGFFYSWWDKGLNGETDSLANITEFNSIAYLYEGGAFQAGVAINELEGATTKANGIGVQGIVSATVGGVSIDLLGGYDTEVEEGAIRALVSAELGPGVFQIAGVWASDPNVYFAASEWTVATSYRYNATEKLAITPGLHYWGDYGFVSDADQWRGGLAVDYKITSGLASRVSVQYTSRDIGADTEDFVSGFVRLQRDF.

The N-terminal stretch at 1–17 is a signal peptide; it reads MRMNFSTVLLGSSVALA.

This sequence belongs to the alphaproteobacteria porin family.

Its subcellular location is the cell outer membrane. May act as an outer membrane pore. This chain is Putative outer membrane protein y4fJ, found in Sinorhizobium fredii (strain NBRC 101917 / NGR234).